We begin with the raw amino-acid sequence, 1386 residues long: DNA-directed RNA polymerase subunit beta (1386 aa).

Belongs to the RNA polymerase beta chain family. In terms of assembly, the RNAP catalytic core consists of 2 alpha, 1 beta, 1 beta' and 1 omega subunit. When a sigma factor is associated with the core the holoenzyme is formed, which can initiate transcription.

It catalyses the reaction RNA(n) + a ribonucleoside 5'-triphosphate = RNA(n+1) + diphosphate. In terms of biological role, DNA-dependent RNA polymerase catalyzes the transcription of DNA into RNA using the four ribonucleoside triphosphates as substrates. This is DNA-directed RNA polymerase subunit beta from Nitratiruptor sp. (strain SB155-2).